A 193-amino-acid polypeptide reads, in one-letter code: Holliday junction branch migration complex subunit RuvA (193 aa).

A domain I region spans residues 1–64 (MIGRIAGTLI…EDAHLLYGFG (64 aa)). Residues 65–143 (SAAERNTFRE…AELGHAPGAA (79 aa)) form a domain II region. The segment at 144 to 151 (PVHDSAVD) is flexible linker. Residues 151–193 (DILNALLALGYSEKEAATAIKQVPAGTGVSDGIKLALKALSKA) form a domain III region.

Belongs to the RuvA family. In terms of assembly, homotetramer. Forms an RuvA(8)-RuvB(12)-Holliday junction (HJ) complex. HJ DNA is sandwiched between 2 RuvA tetramers; dsDNA enters through RuvA and exits via RuvB. An RuvB hexamer assembles on each DNA strand where it exits the tetramer. Each RuvB hexamer is contacted by two RuvA subunits (via domain III) on 2 adjacent RuvB subunits; this complex drives branch migration. In the full resolvosome a probable DNA-RuvA(4)-RuvB(12)-RuvC(2) complex forms which resolves the HJ.

The protein resides in the cytoplasm. Its function is as follows. The RuvA-RuvB-RuvC complex processes Holliday junction (HJ) DNA during genetic recombination and DNA repair, while the RuvA-RuvB complex plays an important role in the rescue of blocked DNA replication forks via replication fork reversal (RFR). RuvA specifically binds to HJ cruciform DNA, conferring on it an open structure. The RuvB hexamer acts as an ATP-dependent pump, pulling dsDNA into and through the RuvAB complex. HJ branch migration allows RuvC to scan DNA until it finds its consensus sequence, where it cleaves and resolves the cruciform DNA. The sequence is that of Holliday junction branch migration complex subunit RuvA from Cupriavidus pinatubonensis (strain JMP 134 / LMG 1197) (Cupriavidus necator (strain JMP 134)).